A 1047-amino-acid polypeptide reads, in one-letter code: Carbamoyl phosphate synthase arginine-specific large chain (1047 aa).

Positions 1-401 (MPKRTDIQSV…GLQKAVRSLE (401 aa)) are carboxyphosphate synthetic domain. ATP is bound by residues Arg129, Arg169, Gly175, Gly176, Lys208, Ile210, Glu215, Gly241, Val242, His243, Gln284, and Glu298. The region spanning 133–327 (RQLMHELHEP…IARMAAKLSL (195 aa)) is the ATP-grasp 1 domain. Residues Gln284, Glu298, and Asn300 each coordinate Mg(2+). Mn(2+) is bound by residues Gln284, Glu298, and Asn300. The interval 402–549 (IKTHGLSLPS…YSSWTGENDL (148 aa)) is oligomerization domain. Residues 550–933 (LLPEKAKERV…AFRKAFAWGE (384 aa)) are carbamoyl phosphate synthetic domain. In terms of domain architecture, ATP-grasp 2 spans 676-865 (YEFMRSVEVP…LITYTIDVLF (190 aa)). Arg712, Ala750, Glu756, Gly781, Val782, His783, Ser784, Gln824, and Glu836 together coordinate ATP. Mg(2+)-binding residues include Gln824, Glu836, and Asn838. Mn(2+) contacts are provided by Gln824, Glu836, and Asn838. Residues 934–1047 (EQTPALFRKK…PFLLPDVVMN (114 aa)) are allosteric domain. Residues 937 to 1047 (PALFRKKGSV…PFLLPDVVMN (111 aa)) enclose the MGS-like domain.

It belongs to the CarB family. In terms of assembly, composed of two chains; the small (or glutamine) chain promotes the hydrolysis of glutamine to ammonia, which is used by the large (or ammonia) chain to synthesize carbamoyl phosphate. Tetramer of heterodimers (alpha,beta)4. Mg(2+) is required as a cofactor. It depends on Mn(2+) as a cofactor.

The catalysed reaction is hydrogencarbonate + L-glutamine + 2 ATP + H2O = carbamoyl phosphate + L-glutamate + 2 ADP + phosphate + 2 H(+). The enzyme catalyses hydrogencarbonate + NH4(+) + 2 ATP = carbamoyl phosphate + 2 ADP + phosphate + 2 H(+). It participates in amino-acid biosynthesis; L-arginine biosynthesis; carbamoyl phosphate from bicarbonate: step 1/1. Its function is as follows. Large subunit of the glutamine-dependent carbamoyl phosphate synthetase (CPSase). CPSase catalyzes the formation of carbamoyl phosphate from the ammonia moiety of glutamine, carbonate, and phosphate donated by ATP, constituting the first step of the biosynthetic pathway leading to arginine and/or urea. The large subunit (synthetase) binds the substrates ammonia (free or transferred from glutamine from the small subunit), hydrogencarbonate and ATP and carries out an ATP-coupled ligase reaction, activating hydrogencarbonate by forming carboxy phosphate which reacts with ammonia to form carbamoyl phosphate. The polypeptide is Carbamoyl phosphate synthase arginine-specific large chain (Halalkalibacterium halodurans (strain ATCC BAA-125 / DSM 18197 / FERM 7344 / JCM 9153 / C-125) (Bacillus halodurans)).